Reading from the N-terminus, the 339-residue chain is tRNA(Ile)-lysidine synthase (339 aa).

34 to 39 lines the ATP pocket; it reads SGGPDS.

Belongs to the tRNA(Ile)-lysidine synthase family.

The protein localises to the cytoplasm. It catalyses the reaction cytidine(34) in tRNA(Ile2) + L-lysine + ATP = lysidine(34) in tRNA(Ile2) + AMP + diphosphate + H(+). Ligates lysine onto the cytidine present at position 34 of the AUA codon-specific tRNA(Ile) that contains the anticodon CAU, in an ATP-dependent manner. Cytidine is converted to lysidine, thus changing the amino acid specificity of the tRNA from methionine to isoleucine. In Methylobacterium nodulans (strain LMG 21967 / CNCM I-2342 / ORS 2060), this protein is tRNA(Ile)-lysidine synthase.